The primary structure comprises 280 residues: Shikimate dehydrogenase (NADP(+)) (280 aa).

Residues Ser-15–Ser-17 and Thr-62 contribute to the shikimate site. The active-site Proton acceptor is Lys-66. Residue Glu-78 coordinates NADP(+). Shikimate is bound by residues Asn-87 and Asp-102. NADP(+) contacts are provided by residues Gly-127–Ala-131, Asn-151–Lys-156, and Ile-219. Position 221 (Tyr-221) interacts with shikimate. Gly-242 lines the NADP(+) pocket.

Belongs to the shikimate dehydrogenase family. As to quaternary structure, homodimer.

The catalysed reaction is shikimate + NADP(+) = 3-dehydroshikimate + NADPH + H(+). It participates in metabolic intermediate biosynthesis; chorismate biosynthesis; chorismate from D-erythrose 4-phosphate and phosphoenolpyruvate: step 4/7. Involved in the biosynthesis of the chorismate, which leads to the biosynthesis of aromatic amino acids. Catalyzes the reversible NADPH linked reduction of 3-dehydroshikimate (DHSA) to yield shikimate (SA). This chain is Shikimate dehydrogenase (NADP(+)), found in Bacillus subtilis (strain 168).